Consider the following 320-residue polypeptide: MNKNLEANRNRTLSEGIHKNIKVRAPKIDKTAISPYDRYCDGYGMPGAYGNGYVSVLKVSVGTVKKTDDILLDGIVSYDRAEINDAYVGQINMLTASSFCGVAGQVWGHDLATHDSIANDEIKPLYELKQFDGTPLKVYDAKPLLEAGIELFGTEKNRRFTTAPGAHVICANKSATAYRPKENRPLKEGEAYGVWSFIALSLSNDRDHCADLFIEDAGLWTKNDNPEDLKKFLEDHRKAVTWSVVECGRDSHVVFERTYIGFAYVIMKPGEIGNALTCAPYVTLARDAVPSEGFPSLNRISLSQWLDDMNFDSLVNPSKK.

A propeptide spanning residues 2 to 11 (NKNLEANRNR) is cleaved from the precursor. At Ser-98 the chain carries Pyruvic acid (Ser). Catalysis depends on Glu-215, which acts as the Proton donor.

The proenzyme is a hexamer of identical pi chains; each pi chain monomer is cleaved to form a small (or beta) chain and a large (or alpha) chain by non-hydrolytic self-catalysis. It depends on pyruvate as a cofactor.

It catalyses the reaction L-histidine + H(+) = histamine + CO2. The chain is Histidine decarboxylase proenzyme (hdc) from Clostridium perfringens (strain ATCC 13124 / DSM 756 / JCM 1290 / NCIMB 6125 / NCTC 8237 / Type A).